A 138-amino-acid chain; its full sequence is Large ribosomal subunit protein uL29 (138 aa).

The tract at residues 1–79 (MAKSKMLDLR…TNKVIKADYN (79 aa)) is large ribosomal subunit protein uL29. The tract at residues 80 to 138 (KAVEEAEKAGKEVRAKQRKFLEEQYGQQSQTKVNEADIQKAMQAAEQETVEPDTKGETK) is unknown. A disordered region spans residues 103–138 (QYGQQSQTKVNEADIQKAMQAAEQETVEPDTKGETK).

Belongs to the universal ribosomal protein uL29 family.

This chain is Large ribosomal subunit protein uL29, found in Mycoplasma capricolum subsp. capricolum (strain California kid / ATCC 27343 / NCTC 10154).